Consider the following 162-residue polypeptide: MVYTEENIRELILRVLAPPLALFSLQVQNRKNHALIEIELDHLTDKTGSASLEDCETVSRRLKEELDQWGEEFDFTLQVSSAGAERVLRLPEDLIRFQGLLVKLEVPLESGKWDKRLYRLGPVSGDSVELTLYDRKTRHKKNQKSVSMPIAEIRKGNLYLEI.

The protein belongs to the RimP family.

The protein localises to the cytoplasm. Required for maturation of 30S ribosomal subunits. This is Ribosome maturation factor RimP from Leptospira biflexa serovar Patoc (strain Patoc 1 / Ames).